We begin with the raw amino-acid sequence, 234 residues long: Purine nucleoside phosphorylase DeoD-type (234 aa).

His4 lines the a purine D-ribonucleoside pocket. Phosphate is bound by residues Gly20, Arg24, Arg43, and 87-90 (RIGS). A purine D-ribonucleoside-binding positions include 179 to 181 (DME) and 203 to 204 (SD). Residue Asp204 is the Proton donor of the active site.

This sequence belongs to the PNP/UDP phosphorylase family. In terms of assembly, homohexamer; trimer of homodimers.

It catalyses the reaction a purine D-ribonucleoside + phosphate = a purine nucleobase + alpha-D-ribose 1-phosphate. The catalysed reaction is a purine 2'-deoxy-D-ribonucleoside + phosphate = a purine nucleobase + 2-deoxy-alpha-D-ribose 1-phosphate. In terms of biological role, catalyzes the reversible phosphorolytic breakdown of the N-glycosidic bond in the beta-(deoxy)ribonucleoside molecules, with the formation of the corresponding free purine bases and pentose-1-phosphate. The protein is Purine nucleoside phosphorylase DeoD-type of Shewanella oneidensis (strain ATCC 700550 / JCM 31522 / CIP 106686 / LMG 19005 / NCIMB 14063 / MR-1).